The sequence spans 468 residues: Na(+)/H(+) antiporter NhaA (468 aa).

Helical transmembrane passes span 32–52, 83–103, 119–139, 148–168, 178–198, 205–225, 320–340, 354–374, 397–417, and 428–448; these read FLHIEAVSGIVLLAAAGIALL, LHFWINDALMTIFFLVVGMEI, ALPMAAALGGVIVPALIYLAI, GWAVPTATDIAFAVGVLALLG, FLLALAIIDDIVAVLIIAVAF, GGFLVAGTGILMVLGLQWIGV, ALHPWVAYLVMPLFALANAGV, GAMFGVVLALVVGKPLGIVSV, LVGLLAGIGFTMSIFIATLAF, and LGVLLASAIAATIGLTWGFIY.

Belongs to the NhaA Na(+)/H(+) (TC 2.A.33) antiporter family.

It localises to the cell inner membrane. It catalyses the reaction Na(+)(in) + 2 H(+)(out) = Na(+)(out) + 2 H(+)(in). In terms of biological role, na(+)/H(+) antiporter that extrudes sodium in exchange for external protons. The sequence is that of Na(+)/H(+) antiporter NhaA from Cupriavidus necator (strain ATCC 17699 / DSM 428 / KCTC 22496 / NCIMB 10442 / H16 / Stanier 337) (Ralstonia eutropha).